A 123-amino-acid chain; its full sequence is Putative membrane protein insertion efficiency factor (123 aa).

The segment at 1–23 is disordered; the sequence is MGSCGGKHTGKGAPKPYSRNFTD.

This sequence belongs to the UPF0161 family.

It localises to the cell inner membrane. In terms of biological role, could be involved in insertion of integral membrane proteins into the membrane. This is Putative membrane protein insertion efficiency factor from Brucella abortus (strain 2308).